The sequence spans 537 residues: uncharacterized protein (537 aa).

Belongs to the RuBisCO large chain family. Type IV subfamily.

Functionally, unknown. Probably does not have RuBisCO activity. This is an uncharacterized protein from Symbiodinium sp. (Dinoflagellate).